The following is a 319-amino-acid chain: Tetrahydromethanopterin S-methyltransferase subunit H (319 aa).

Belongs to the MtrH family. As to quaternary structure, the complex is composed of 8 subunits; MtrA, MtrB, MtrC, MtrD, MtrE, MtrF, MtrG and MtrH.

The catalysed reaction is 5-methyl-5,6,7,8-tetrahydromethanopterin + coenzyme M + 2 Na(+)(in) = 5,6,7,8-tetrahydromethanopterin + methyl-coenzyme M + 2 Na(+)(out). Its pathway is one-carbon metabolism; methanogenesis from CO(2); methyl-coenzyme M from 5,10-methylene-5,6,7,8-tetrahydromethanopterin: step 2/2. Part of a complex that catalyzes the formation of methyl-coenzyme M and tetrahydromethanopterin from coenzyme M and methyl-tetrahydromethanopterin. This is an energy-conserving, sodium-ion translocating step. MtrH catalyzes the transfer of the methyl group from methyl-tetrahydromethanopterin to the corrinoid prosthetic group of MtrA. The protein is Tetrahydromethanopterin S-methyltransferase subunit H of Methanococcus vannielii (strain ATCC 35089 / DSM 1224 / JCM 13029 / OCM 148 / SB).